Reading from the N-terminus, the 285-residue chain is Eukaryotic translation initiation factor 3 subunit F-2 (285 aa).

The 135-residue stretch at 11-145 (VFLKPLVLFQ…TRLYCAVEMG (135 aa)) folds into the MPN domain.

It belongs to the eIF-3 subunit F family. In terms of assembly, component of the eukaryotic translation initiation factor 3 (eIF-3) complex. The eIF-3 complex interacts with pix.

It localises to the cytoplasm. Component of the eukaryotic translation initiation factor 3 (eIF-3) complex, which is involved in protein synthesis of a specialized repertoire of mRNAs and, together with other initiation factors, stimulates binding of mRNA and methionyl-tRNAi to the 40S ribosome. The eIF-3 complex specifically targets and initiates translation of a subset of mRNAs involved in cell proliferation. This chain is Eukaryotic translation initiation factor 3 subunit F-2, found in Drosophila sechellia (Fruit fly).